We begin with the raw amino-acid sequence, 693 residues long: MFRVQRLRMFSTSRALYAGQNMTEKIVQRHAVGLPEGKTVVSGDYVSIKPAHCMSHDNSWPVALKFMGLGASTIKNPRQVVNTLDHDVQNKSEKNLTKYKNIENFAKKHGIDFYPAGRGIGHQIMIEEGYAFPLTMTVASDSHSNTYGGIGALGTPIVRTDAAAIWATGQTWWQIPPVAQVELKGELPAGISGKDIIVALCGVFNQDQVLNHAIEFTGDSLDKIPIDYRLTIANMTTEWGALSGLFPVDNVLLDFYRNRLTKVGNNHPRINEARINELQAKSDSLQADPDAKYAKKLIIDLSTLTHYVSGPNSVKISSTVDDLSKQDIKVNKAYLVSCTNSRLSDLESAANVVCPSGDINQVHKVAEGVEFYIAAASSEVEAEARATGAWQKLLNAGCLPLPAGCGPCIGLGTGLLEEGQVGISATNRNFKGRMGSKDALAYLASPSVVAASAILGKIGSPAEVLGTKDPNFTGVVATVEDAPATSADGKDVADESGASGSVEILEGFPSEISGELVLCDADNINTDGIYPGKYTYQDDVPKETMAKVCMENYDPDFQTKANPGDILISGFNFGTGSSREQAATAILAKGIKLVVSGSFGNIFFRNSINNALLTLEIPALINMLRDRYKDAPKELTRRTGWFLKWDVSQAKVYVTEGSVNGPIVLEQKVGELGKNLQEIIVKGGLESWVKSQL.

Residues methionine 1 to tyrosine 17 constitute a mitochondrion transit peptide. Residues cysteine 338, cysteine 405, and cysteine 408 each coordinate [4Fe-4S] cluster.

It belongs to the aconitase/IPM isomerase family. It depends on [4Fe-4S] cluster as a cofactor.

It localises to the mitochondrion. The enzyme catalyses (2R,3S)-homoisocitrate = cis-homoaconitate + H2O. Its pathway is amino-acid biosynthesis; L-lysine biosynthesis via AAA pathway; L-alpha-aminoadipate from 2-oxoglutarate: step 3/5. Functionally, catalyzes the reversible hydration of cis-homoaconitate to (2R,3S)-homoisocitrate, a step in the alpha-aminoadipate pathway for lysine biosynthesis. This is Homoaconitase, mitochondrial (LYS4) from Kluyveromyces lactis (strain ATCC 8585 / CBS 2359 / DSM 70799 / NBRC 1267 / NRRL Y-1140 / WM37) (Yeast).